Reading from the N-terminus, the 221-residue chain is Thiamine-phosphate synthase (221 aa).

Residues 44-48 and asparagine 79 each bind 4-amino-2-methyl-5-(diphosphooxymethyl)pyrimidine; that span reads QFREK. Residues aspartate 80 and aspartate 99 each coordinate Mg(2+). 4-amino-2-methyl-5-(diphosphooxymethyl)pyrimidine is bound at residue serine 117. A 2-[(2R,5Z)-2-carboxy-4-methylthiazol-5(2H)-ylidene]ethyl phosphate-binding site is contributed by 143 to 145; sequence TRS. Residue lysine 146 coordinates 4-amino-2-methyl-5-(diphosphooxymethyl)pyrimidine. Residues glycine 175 and 195-196 each bind 2-[(2R,5Z)-2-carboxy-4-methylthiazol-5(2H)-ylidene]ethyl phosphate; that span reads IS.

This sequence belongs to the thiamine-phosphate synthase family. Requires Mg(2+) as cofactor.

It carries out the reaction 2-[(2R,5Z)-2-carboxy-4-methylthiazol-5(2H)-ylidene]ethyl phosphate + 4-amino-2-methyl-5-(diphosphooxymethyl)pyrimidine + 2 H(+) = thiamine phosphate + CO2 + diphosphate. The catalysed reaction is 2-(2-carboxy-4-methylthiazol-5-yl)ethyl phosphate + 4-amino-2-methyl-5-(diphosphooxymethyl)pyrimidine + 2 H(+) = thiamine phosphate + CO2 + diphosphate. It catalyses the reaction 4-methyl-5-(2-phosphooxyethyl)-thiazole + 4-amino-2-methyl-5-(diphosphooxymethyl)pyrimidine + H(+) = thiamine phosphate + diphosphate. Its pathway is cofactor biosynthesis; thiamine diphosphate biosynthesis; thiamine phosphate from 4-amino-2-methyl-5-diphosphomethylpyrimidine and 4-methyl-5-(2-phosphoethyl)-thiazole: step 1/1. Condenses 4-methyl-5-(beta-hydroxyethyl)thiazole monophosphate (THZ-P) and 2-methyl-4-amino-5-hydroxymethyl pyrimidine pyrophosphate (HMP-PP) to form thiamine monophosphate (TMP). The protein is Thiamine-phosphate synthase of Geobacillus thermodenitrificans (strain NG80-2).